The chain runs to 116 residues: NADH-ubiquinone oxidoreductase chain 3 (116 aa).

The next 3 membrane-spanning stretches (helical) occupy residues 3-23 (LILA…MIAF), 56-76 (FFLV…LLPL), and 85-105 (PTLA…GLIH).

This sequence belongs to the complex I subunit 3 family.

It localises to the mitochondrion membrane. The catalysed reaction is a ubiquinone + NADH + 5 H(+)(in) = a ubiquinol + NAD(+) + 4 H(+)(out). Its function is as follows. Core subunit of the mitochondrial membrane respiratory chain NADH dehydrogenase (Complex I) that is believed to belong to the minimal assembly required for catalysis. Complex I functions in the transfer of electrons from NADH to the respiratory chain. The immediate electron acceptor for the enzyme is believed to be ubiquinone. In Latimeria chalumnae (Coelacanth), this protein is NADH-ubiquinone oxidoreductase chain 3 (MT-ND3).